Reading from the N-terminus, the 191-residue chain is UPF0312 protein Shewana3_1179 (191 aa).

Residues 1-22 (MKKQLLAALIGGSLLAPMAASA) form the signal peptide.

The protein belongs to the UPF0312 family. Type 1 subfamily.

The protein resides in the periplasm. The protein is UPF0312 protein Shewana3_1179 of Shewanella sp. (strain ANA-3).